The following is a 344-amino-acid chain: Protein pelota homolog (344 aa).

This sequence belongs to the eukaryotic release factor 1 family. Pelota subfamily. As to quaternary structure, monomer. A divalent metal cation serves as cofactor.

It localises to the cytoplasm. May function in recognizing stalled ribosomes, interact with stem-loop structures in stalled mRNA molecules, and effect endonucleolytic cleavage of the mRNA. May play a role in the release non-functional ribosomes and degradation of damaged mRNAs. Has endoribonuclease activity. The polypeptide is Protein pelota homolog (Saccharolobus islandicus (strain M.14.25 / Kamchatka #1) (Sulfolobus islandicus)).